Consider the following 235-residue polypeptide: MCMALQPEVSRWDVTPSEAVELQRRLREQLVLRPPPGLKVERIAGADISTEKGKDTGFGGFVVLDVETLAPVAQSEAVVTLHFPYVPGLLSFRELPTIAAAWERLTVRPDVVIFDGQGTAHPRRMGIACHGGLLFGVPSIGCAKSLLVGTHGPLGEARGSTAPLMHRGEVVGMAVRTRKGVQPVYVSPGHLMDLPTAVEWVLKVSPKYREPETTRHAHRLVNALRRADGEAAELE.

Residues Asp-47 and Asp-115 each coordinate Mg(2+).

This sequence belongs to the endonuclease V family. Mg(2+) serves as cofactor.

The protein resides in the cytoplasm. The enzyme catalyses Endonucleolytic cleavage at apurinic or apyrimidinic sites to products with a 5'-phosphate.. Functionally, DNA repair enzyme involved in the repair of deaminated bases. Selectively cleaves double-stranded DNA at the second phosphodiester bond 3' to a deoxyinosine leaving behind the intact lesion on the nicked DNA. This chain is Endonuclease V, found in Myxococcus xanthus (strain DK1622).